The primary structure comprises 1514 residues: ABC transporter C family member 5 (1514 aa).

10 consecutive transmembrane segments (helical) span residues 16–36 (LLELCSVIINLLLFLVFLFAV), 76–96 (FGFNLSLLCCLYVLGVQVLVL), 111–131 (FVLCFPASQSLAWFVLSFLVL), 142–162 (PFLVRIWWFLAFSICLCTMYV), 177–197 (SHVVANLAVTPALGFLCFLAW), 312–332 (VFAGLNTLVSYVGPYLISYFV), 334–354 (YLGGKEIFPHEGYVLAGIFFT), 421–441 (WYLHDIWMLPMQIVLALAILY), 446–466 (IAAVATLVATIISILVTIPLA), and 533–553 (FIFWSSPIFVAAVTFATSIFL). The ABC transmembrane type-1 1 domain occupies 307 to 588 (AACNAVFAGL…FPDLVSMMAQ (282 aa)). An ABC transporter 1 domain is found at 622–845 (IEIKDGVFCW…GTDFKALVSA (224 aa)). 657–664 (GTVGSGKS) provides a ligand contact to ATP. Residues 899–927 (ASDLKAIKEKKKKAKRSRKKQLVQEEERV) adopt a coiled-coil conformation. 6 consecutive transmembrane segments (helical) span residues 946-966 (GALIPLIILAQAAFQFLQIAS), 986-1006 (PTLLLIVYTALAFGSSVFIFV), 1078-1098 (IVAVMTNVTWQVFLLVVPVAV), 1117-1137 (IVSIQKSPIIHLFGESIAGAA), 1155-1175 (LLDCFVRPFFCSIAAIEWLCL), and 1180-1200 (LSTLVFAFCMVLLVSFPHGTI). The ABC transmembrane type-1 2 domain occupies 949–1231 (IPLIILAQAA…WILSFCKLEN (283 aa)). The 235-residue stretch at 1268-1502 (IELVDVKVRY…KSSMFLKLVT (235 aa)) folds into the ABC transporter 2 domain. Position 1302-1309 (1302-1309 (GRTGSGKS)) interacts with ATP.

The protein belongs to the ABC transporter superfamily. ABCC family. Conjugate transporter (TC 3.A.1.208) subfamily. As to expression, ubiquitous, mostly in vascular tissues and epidermis, including guard cells.

The protein resides in the membrane. It carries out the reaction ATP + H2O + xenobioticSide 1 = ADP + phosphate + xenobioticSide 2.. With respect to regulation, (E(2)17G) transport activity in negatively regulated by organic anions such as oestradiol-3-sulfate, luteolin-7-O-diglucuronide-4'-O-glucuronide, glycocholate, vanadate and the sulfonylurea glibenclamide, and, to a lower extent, by bafilomycin A1, NH(4)Cl, GSH, GSSG and DNB-GS. Functionally, pump for glutathione S-conjugates. Involved in regulation of K(+) and Na(+) cell content. Mediates resistance to NaCl and Li(+), confers sensitivity to sulfonylurea drugs such as glibenclamide (inducer of stomatal opening), and required for stomatal opening regulation by auxin, abscisic acid (ABA) and external Ca(2+). Transports oestradiol-17-(beta-D-glucuronide) (E(2)17G). Involved in the root auxin content regulation that controls the transition from primary root elongation to lateral root formation. Plays a role in ABA-mediated germination inhibition. High-affinity inositol hexakisphosphate transporter that plays a role in guard cell signaling and phytic acid storage. Required for phytic acid accumulation in developing seeds. Phytic acid is the primary storage form of phosphorus in cereal grains and other plant seeds. The polypeptide is ABC transporter C family member 5 (ABCC5) (Arabidopsis thaliana (Mouse-ear cress)).